The sequence spans 610 residues: ABC transporter ATP-binding protein/permease wht-3 (610 aa).

The ABC transporter domain occupies 42 to 277 (VKTRKKLFSK…FADCGHPIPK (236 aa)). 74-81 (GASGAGKT) contributes to the ATP binding site. Helical transmembrane passes span 396–416 (ALYFLIAELTFSTMFGIMTFM), 446–466 (LPLFTIDGALMIVISYWMIGL), 477–497 (ILISVLVEQSATSCGLFLACL), 503–523 (LAIAFAVPASGLFALLSGLYG), and 584–604 (VIGLCSIVIFFYLAGYIALFI).

Belongs to the ABC transporter superfamily. ABCG family. Eye pigment precursor importer (TC 3.A.1.204) subfamily.

It localises to the membrane. Its function is as follows. Required for efficient RNA interference (RNAi) of pop-1 indicating a role in the germline development. The sequence is that of ABC transporter ATP-binding protein/permease wht-3 (wht-3) from Caenorhabditis elegans.